The following is a 216-amino-acid chain: Adenylate kinase (216 aa).

10 to 15 contributes to the ATP binding site; sequence GSGKGT. The NMP stretch occupies residues 30–59; it reads STGDMLRAAVKEGTPMGVKAKAKMDAGALV. AMP contacts are provided by residues Thr31, Arg36, 57–59, 85–88, and Gln92; these read ALV and GFPR. An LID region spans residues 126-163; that stretch reads GRRTCRDCGKMYHVEFDAPAVADKCDKCGGQLFQRDDD. Residue Arg127 participates in ATP binding. Residues Cys130, Cys133, Cys150, and Cys153 each coordinate Zn(2+). Positions 160 and 171 each coordinate AMP. ATP is bound at residue Lys199.

The protein belongs to the adenylate kinase family. In terms of assembly, monomer.

It is found in the cytoplasm. The catalysed reaction is AMP + ATP = 2 ADP. It functions in the pathway purine metabolism; AMP biosynthesis via salvage pathway; AMP from ADP: step 1/1. Catalyzes the reversible transfer of the terminal phosphate group between ATP and AMP. Plays an important role in cellular energy homeostasis and in adenine nucleotide metabolism. This is Adenylate kinase from Syntrophotalea carbinolica (strain DSM 2380 / NBRC 103641 / GraBd1) (Pelobacter carbinolicus).